Here is a 654-residue protein sequence, read N- to C-terminus: Threonine--tRNA ligase (654 aa).

Residues 1–63 (MAQISLTFPD…DADASIAIHT (63 aa)) enclose the TGS domain. A catalytic region spans residues 247–544 (DHRKLGREMN…LIENFAGKLP (298 aa)). C344, H395, and H521 together coordinate Zn(2+).

This sequence belongs to the class-II aminoacyl-tRNA synthetase family. As to quaternary structure, homodimer. Requires Zn(2+) as cofactor.

Its subcellular location is the cytoplasm. It catalyses the reaction tRNA(Thr) + L-threonine + ATP = L-threonyl-tRNA(Thr) + AMP + diphosphate + H(+). Catalyzes the attachment of threonine to tRNA(Thr) in a two-step reaction: L-threonine is first activated by ATP to form Thr-AMP and then transferred to the acceptor end of tRNA(Thr). Also edits incorrectly charged L-seryl-tRNA(Thr). The sequence is that of Threonine--tRNA ligase from Dinoroseobacter shibae (strain DSM 16493 / NCIMB 14021 / DFL 12).